The chain runs to 346 residues: Protein Rae1 (346 aa).

4 WD repeats span residues 17–61 (ASPP…ATVP), 64–105 (MKTM…VMQV), 126–148 (LMTG…PMMT), and 255–289 (VNDI…KLKS).

It belongs to the WD repeat rae1 family. In terms of assembly, interacts with hiw; the interaction with Rae1 may protect hiw from autophagy-mediated degradation. Interacts with Nup98-96. As to expression, head (at protein level).

It is found in the cytoplasm. It localises to the perinuclear region. The protein localises to the nucleus. The protein resides in the nucleus envelope. Its subcellular location is the chromosome. Functionally, probable component of the nuclear pore complex (NPC) which regulates the nuclear export of specific mRNAs and promotes cell cycle progression during mitosis and male meiosis. Acts with Nup98-96 to promote the nuclear export of specific mRNAs such as Moe, however it does not appear to be required for general nuclear mRNA transport. Essential mitotic and male meiotic cell cycle regulator with roles in many aspects of the cell cycle including chromatin organization and condensation, spindle assembly, chromosome segregation, and maintaining nuclear structure. During male meiosis it is required for completion of meiosis I, as well as accurate cytokinesis of the secondary spermatocytes, and postmeiotic differentiation of spermatids. Acts as a downstream regulatory target of the Hippo/SWH (Sav/Wts/Hpo) signaling pathway to promote mitotic cell cycle progression and proliferation during wing and eye development, and thereby plays a key role in integrating the regulation of proliferation with organ size control. When the Hippo/SWH signaling pathway is inactive, Rae1 acts independently of yki to increase organ size by promoting mitotic S-phase entry and increase cellular proliferation. When the Hippo/SWH signaling pathway is active it inhibits the activity of Rae1 in a Wts-dependent manner to restrict organ growth. However, Rae1 is also able to negatively regulate the levels and activity of yki likely by activating the core kinases of the Hippo/SWH signaling pathway hpo and Wts and increasing the protein levels of hpo, Mer and Wts; it is therefore likely that it functions as part of a negative feedback loop with the Hippo/SWH signaling pathway to regulate pathway homeostasis and prevent organ overgrowth. Promotes mitotic cell cycle progression, at least in part, by increasing the accumulation of mitotic cyclins such as CycB, possibly by directly up-regulating cyclin transcripts or by inhibiting the anaphase promoting complex/cyclosome (APC/C) activator fzy. Also required in presynaptic, postmitotic motor neurons to restrain synaptic terminal growth. Promotes the expression and stability of the an E3 ubiquitin ligase of hiw, and is likely to function in the regulation of synaptic growth by binding to hiw and protecting it from autophagy-mediated degradation. The polypeptide is Protein Rae1 (Drosophila melanogaster (Fruit fly)).